Reading from the N-terminus, the 271-residue chain is Zinc finger CCHC domain-containing protein 9 (271 aa).

The disordered stretch occupies residues 1-67 (MTRWARVTTS…RKKNKKKKEY (67 aa)). Residues 7-20 (VTTSNSKRPLSATS) are compositionally biased toward polar residues. The segment covering 22 to 33 (EDMKKGSVERAD) has biased composition (basic and acidic residues). The segment covering 35–46 (SLPNRKQCQSSR) has biased composition (polar residues). Over residues 56 to 65 (AKRKKNKKKK) the composition is skewed to basic residues. CCHC-type zinc fingers lie at residues 128-145 (MVCF…DCPA), 155-172 (GICY…KCRA), 184-201 (AKCF…SCPD), and 211-228 (GSCK…DCRE).

As to expression, detected in brain cortex and in testis.

The protein localises to the nucleus. The protein resides in the nucleolus. In terms of biological role, may down-regulate transcription mediated by NF-kappa-B and the serum response element. The protein is Zinc finger CCHC domain-containing protein 9 (Zcchc9) of Mus musculus (Mouse).